A 274-amino-acid polypeptide reads, in one-letter code: 2,3,4,5-tetrahydropyridine-2,6-dicarboxylate N-succinyltransferase (274 aa).

The substrate site is built by Arg107 and Asp144.

It belongs to the transferase hexapeptide repeat family. In terms of assembly, homotrimer.

It is found in the cytoplasm. It carries out the reaction (S)-2,3,4,5-tetrahydrodipicolinate + succinyl-CoA + H2O = (S)-2-succinylamino-6-oxoheptanedioate + CoA. Its pathway is amino-acid biosynthesis; L-lysine biosynthesis via DAP pathway; LL-2,6-diaminopimelate from (S)-tetrahydrodipicolinate (succinylase route): step 1/3. The sequence is that of 2,3,4,5-tetrahydropyridine-2,6-dicarboxylate N-succinyltransferase from Cereibacter sphaeroides (strain ATCC 17025 / ATH 2.4.3) (Rhodobacter sphaeroides).